Here is a 201-residue protein sequence, read N- to C-terminus: MRLLTLEEGTFAVRYARAVIENYLAGKKIVIESYPEVFNEKRGCFCTLHTYPDKELRGCIGIPEPIMPLIEALEEAAISAATKDPRFPPVTLEEMDSIVVEVSILTPPELIKVNHPKEYLEKIKIGRDGLIIEYGFYRGLLLPQVPVEYGWDVEEYLAHLCLKAGLPPDMWLAEGVKIYRFEAQIFEEVEPRGEVIEKKLL.

The AMMECR1 domain occupies Glu7–Glu197.

The chain is Protein MJ0810 from Methanocaldococcus jannaschii (strain ATCC 43067 / DSM 2661 / JAL-1 / JCM 10045 / NBRC 100440) (Methanococcus jannaschii).